The primary structure comprises 274 residues: ATP synthase subunit a (274 aa).

The next 5 helical transmembrane spans lie at 40 to 60 (FWVC…VILI), 110 to 130 (IFVW…LVPF), 149 to 169 (DVNI…FYSI), 224 to 244 (IFIL…SVPW), and 245 to 265 (AIFH…LTIV).

The protein belongs to the ATPase A chain family. In terms of assembly, F-type ATPases have 2 components, CF(1) - the catalytic core - and CF(0) - the membrane proton channel. CF(1) has five subunits: alpha(3), beta(3), gamma(1), delta(1), epsilon(1). CF(0) has three main subunits: a(1), b(2) and c(9-12). The alpha and beta chains form an alternating ring which encloses part of the gamma chain. CF(1) is attached to CF(0) by a central stalk formed by the gamma and epsilon chains, while a peripheral stalk is formed by the delta and b chains.

Its subcellular location is the cell membrane. In terms of biological role, key component of the proton channel; it plays a direct role in the translocation of protons across the membrane. The chain is ATP synthase subunit a from Buchnera aphidicola subsp. Baizongia pistaciae (strain Bp).